Here is a 329-residue protein sequence, read N- to C-terminus: Arylacetonitrilase (329 aa).

The region spanning 6–279 is the CN hydrolase domain; the sequence is VRVAVTQAEP…EGIVYANLDM (274 aa). Residue Glu-46 is the Proton acceptor of the active site. Residue Lys-126 is part of the active site. The Nucleophile role is filled by Cys-161.

The protein belongs to the carbon-nitrogen hydrolase superfamily. Nitrilase family.

The enzyme catalyses a nitrile + 2 H2O = a carboxylate + NH4(+). It carries out the reaction 4-chlorophenylacetonitrile + 2 H2O = 4-chlorophenylacetate + NH4(+). Its function is as follows. Nitrilase that hydrolyzes preferentially phenylacetonitrile and heteroaromatic nitriles, but has significantly lower activity for (R,S)-mandelonitrile. Also acts on dinitriles like phenylenediacetonitriles (PDAs) 1,2-PDA, 1,3-PDA, and 1,4-PDA, and cyanophenyl acetonitriles (CPAs) 2-CPA and 4-CPA. This is Arylacetonitrilase from Hypocrea virens (strain Gv29-8 / FGSC 10586) (Gliocladium virens).